A 235-amino-acid polypeptide reads, in one-letter code: SMN complex subunit yip11/gem2 (235 aa).

The disordered stretch occupies residues 1–34 (MPSKRKRNPLQYQTSGSLDEETNQRSAFPQIDNN). A compositionally biased stretch (polar residues) spans 24–34 (QRSAFPQIDNN). Ser117 and Ser118 each carry phosphoserine.

Belongs to the gemin-2 family. Part of the core SMN complex at least composed of smn1, yip11/gem2, gem6, gem7 and gem8. Interacts with smn1; the interaction is direct.

The protein resides in the nucleus. Its function is as follows. The SMN complex catalyzes the assembly of small nuclear ribonucleoproteins (snRNPs), the building blocks of the spliceosome, and thereby plays an important role in the splicing of cellular pre-mRNAs. Most spliceosomal snRNPs contain a common set of Sm proteins smb1, smd1, smd2, smd3, sme1, smf1 and smg1 that assemble in a heptameric protein ring on the Sm site of the small nuclear RNA to form the core snRNP. In the cytosol, the Sm proteins smd1, smd2, sme1, smf1 and smg1 (5Sm) are trapped in an inactive 6S pICln-Sm complex by the chaperone saf5. To complete assembly of core snRNPs, the SMN complex accepts 5Sm from saf5. Binding of snRNA inside 5Sm ultimately triggers eviction of the SMN complex, thereby allowing binding of smd3 and smb1 to complete assembly of the core snRNP. Within the SMN complex, yip11/gem2 constrains the conformation of 5Sm, thereby promoting 5Sm binding to snRNA containing the snRNP code (a nonameric Sm site and a 3'-adjacent stem-loop), thus preventing progression of assembly until a cognate substrate is bound. This is SMN complex subunit yip11/gem2 (yip11) from Schizosaccharomyces pombe (strain 972 / ATCC 24843) (Fission yeast).